The primary structure comprises 674 residues: Ribonuclease E (674 aa).

In terms of domain architecture, S1 motif spans 35–117 (GDIYLGLVDN…LTGNISMPGR (83 aa)). Positions 296 and 339 each coordinate Mg(2+). Zn(2+) is bound by residues C397 and C400. Disordered stretches follow at residues 458–529 (PLDL…RRVE) and 626–674 (QPRE…SSAE). 2 stretches are compositionally biased toward basic and acidic residues: residues 484-493 (GSEFSEKENI) and 509-529 (TKEK…RRVE). Residues 663–674 (RPGRRRRRSSAE) are compositionally biased toward basic residues. The C4 Arg-rich motif, probably responsible for interaction with PNPase motif lies at 665–673 (GRRRRRSSA).

It belongs to the RNase E/G family. Fractionates in a 250-300 kDa region, which is too small to be the equivalent of an RNA degradosome, as occurs with E.coli RNase E. Interacts with polynucleotide phosphorylase (PNPase, pnp), probably via the C4 Arg-rich motif (residues 665-673). Mg(2+) is required as a cofactor.

The protein resides in the cytoplasm. Its subcellular location is the cell inner membrane. The catalysed reaction is Endonucleolytic cleavage of single-stranded RNA in A- and U-rich regions.. Endoribonuclease that plays a central role in rRNA processing and mRNA decay, and probably tRNA processing. Acts on 9S rRNA (the precursor of 5S rRNA) and RNAI, a molecule that controls the replication of ColE1 plasmid. Upon expression in E.coli does not purify with endogenous degradosome proteins. Prefers 5'-monophosphorylated substrates over 5'-triphosphorylated substrates. Complements an rne temperature-sensitive mutation in E.coli, despite being considerably shorter and not able to interact with the E.coli degradosome. Cleaves AU-rich sequences in vitro, tested with psbA2 mRNA. Complements both an rne temperature-sensitive mutation and an rng deletion in E.coli. Acts in the degradation of psaL mRNA in the presence but not the absence of the sRNA PsrR1. Cleaves the rimO-crhR transcript, contributing to the very short half-life of rimO mRNA. Its function is as follows. mRNA for psbA2, one of the core proteins in photosystem II, is degraded in the dark under control of a cis-acting AU-rich box in its 5'-UTR. RNase E cuts in this box, suggesting it is involved in this dark-induced mRNA instability. Functionally, CRISPR (clustered regularly interspaced short palindromic repeat) is an adaptive immune system that provides protection against mobile genetic elements (viruses, transposable elements and conjugative plasmids). CRISPR clusters contain spacers, sequences complementary to antecedent mobile elements, and target invading nucleic acids. CRISPR clusters are transcribed and processed into CRISPR RNA (crRNA). Endogenous RNase E is required for correct processing of pre-crRNA for the CRISPR3 subtype III-B system in this genome (genes sll7080 to sll7095). This CRISPR3 system does not include a cas6 gene, which is the usual RNase involved in crRNA maturation. The chain is Ribonuclease E from Synechocystis sp. (strain ATCC 27184 / PCC 6803 / Kazusa).